The chain runs to 496 residues: Probable cytosol aminopeptidase (496 aa).

2 residues coordinate Mn(2+): Lys257 and Asp262. Lys269 is an active-site residue. Residues Asp281, Asp341, and Glu343 each contribute to the Mn(2+) site. Arg345 is an active-site residue.

This sequence belongs to the peptidase M17 family. Mn(2+) serves as cofactor.

Its subcellular location is the cytoplasm. The enzyme catalyses Release of an N-terminal amino acid, Xaa-|-Yaa-, in which Xaa is preferably Leu, but may be other amino acids including Pro although not Arg or Lys, and Yaa may be Pro. Amino acid amides and methyl esters are also readily hydrolyzed, but rates on arylamides are exceedingly low.. It carries out the reaction Release of an N-terminal amino acid, preferentially leucine, but not glutamic or aspartic acids.. In terms of biological role, presumably involved in the processing and regular turnover of intracellular proteins. Catalyzes the removal of unsubstituted N-terminal amino acids from various peptides. The protein is Probable cytosol aminopeptidase of Synechococcus sp. (strain CC9311).